Consider the following 171-residue polypeptide: Large ribosomal subunit protein bL17 (171 aa).

Residues 140–152 (KREIQTKAREEKR) show a composition bias toward basic and acidic residues. A disordered region spans residues 140–171 (KREIQTKAREEKRATRKSNSAPVSKETTSKKK). The segment covering 156–165 (KSNSAPVSKE) has biased composition (polar residues).

Belongs to the bacterial ribosomal protein bL17 family. As to quaternary structure, part of the 50S ribosomal subunit. Contacts protein L32.

The sequence is that of Large ribosomal subunit protein bL17 from Leptospira interrogans serogroup Icterohaemorrhagiae serovar copenhageni (strain Fiocruz L1-130).